A 307-amino-acid chain; its full sequence is MTSKLEQLKQYTTVVADTGDFDAIARLKPVDATTNPSLLLKAAALPRYAEHLRRATAGSGGDAGLACDRFAVAVGKDILGVIPGRISTEVDARLSFDSEATLARAHRLVELYEEQGVGRERVLIKIASTWEGIRAAEILEREGIQTNLTLLFSFAQAAACADAGVFLISPFVGRIYDWYRKSENRDYVGAEDPGVRSVSRIYRYYKANGYKTVVMGASFRNLGQIEQLAGCDRLTISPDLLQQLADSQGELPRLLLPGDGEPRQVLDESAFRWQMNEDAMATEKLAEGIRLFARDQEKLEYQLATRH.

Catalysis depends on lysine 125, which acts as the Schiff-base intermediate with substrate.

Belongs to the transaldolase family. Type 1 subfamily. In terms of assembly, homodimer.

The protein localises to the cytoplasm. The catalysed reaction is D-sedoheptulose 7-phosphate + D-glyceraldehyde 3-phosphate = D-erythrose 4-phosphate + beta-D-fructose 6-phosphate. It participates in carbohydrate degradation; pentose phosphate pathway; D-glyceraldehyde 3-phosphate and beta-D-fructose 6-phosphate from D-ribose 5-phosphate and D-xylulose 5-phosphate (non-oxidative stage): step 2/3. In terms of biological role, transaldolase is important for the balance of metabolites in the pentose-phosphate pathway. The protein is Transaldolase of Pseudomonas paraeruginosa (strain DSM 24068 / PA7) (Pseudomonas aeruginosa (strain PA7)).